We begin with the raw amino-acid sequence, 69 residues long: DNA-directed RNA polymerase subunit omega (69 aa).

The protein belongs to the RNA polymerase subunit omega family. The RNAP catalytic core consists of 2 alpha, 1 beta, 1 beta' and 1 omega subunit. When a sigma factor is associated with the core the holoenzyme is formed, which can initiate transcription.

The catalysed reaction is RNA(n) + a ribonucleoside 5'-triphosphate = RNA(n+1) + diphosphate. In terms of biological role, promotes RNA polymerase assembly. Latches the N- and C-terminal regions of the beta' subunit thereby facilitating its interaction with the beta and alpha subunits. The chain is DNA-directed RNA polymerase subunit omega from Symbiobacterium thermophilum (strain DSM 24528 / JCM 14929 / IAM 14863 / T).